We begin with the raw amino-acid sequence, 157 residues long: Protein-export protein SecB (157 aa).

The protein belongs to the SecB family. Homotetramer, a dimer of dimers. One homotetramer interacts with 1 SecA dimer.

The protein resides in the cytoplasm. In terms of biological role, one of the proteins required for the normal export of preproteins out of the cell cytoplasm. It is a molecular chaperone that binds to a subset of precursor proteins, maintaining them in a translocation-competent state. It also specifically binds to its receptor SecA. The chain is Protein-export protein SecB from Methylobacillus flagellatus (strain ATCC 51484 / DSM 6875 / VKM B-1610 / KT).